The chain runs to 227 residues: Monoamine regulon transcriptional regulator (227 aa).

In terms of domain architecture, HTH luxR-type spans Glu155–Ala220. A DNA-binding region (H-T-H motif) is located at residues Asn179 to Arg198.

Functionally, positive regulatory protein for the induction of arylsulfatase synthesis (maoA), tyramine oxidase (tynA), maoC, maoE/F operon, and atsB/A operon which are all regulated by monoamines, and included under the common term of monoamine regulon. The chain is Monoamine regulon transcriptional regulator (moaR) from Klebsiella aerogenes (Enterobacter aerogenes).